Consider the following 99-residue polypeptide: Large ribosomal subunit protein uL23 (99 aa).

Belongs to the universal ribosomal protein uL23 family. Part of the 50S ribosomal subunit. Contacts protein L29, and trigger factor when it is bound to the ribosome.

Its function is as follows. One of the early assembly proteins it binds 23S rRNA. One of the proteins that surrounds the polypeptide exit tunnel on the outside of the ribosome. Forms the main docking site for trigger factor binding to the ribosome. The sequence is that of Large ribosomal subunit protein uL23 from Xanthomonas campestris pv. campestris (strain B100).